Reading from the N-terminus, the 222-residue chain is Small ribosomal subunit protein uS3 (222 aa).

Residues 39-108 (IRKFVKNKLS…NVLINIVEVK (70 aa)) form the KH type-2 domain.

This sequence belongs to the universal ribosomal protein uS3 family. Part of the 30S ribosomal subunit. Forms a tight complex with proteins S10 and S14.

Its function is as follows. Binds the lower part of the 30S subunit head. Binds mRNA in the 70S ribosome, positioning it for translation. The sequence is that of Small ribosomal subunit protein uS3 from Clostridium acetobutylicum (strain ATCC 824 / DSM 792 / JCM 1419 / IAM 19013 / LMG 5710 / NBRC 13948 / NRRL B-527 / VKM B-1787 / 2291 / W).